The sequence spans 708 residues: Leukotoxin translocation ATP-binding protein LktB (708 aa).

The region spanning 1–126 (MEVNHQSNDL…SCYQGKIILV (126 aa)) is the Peptidase C39 domain. Residues 155-437 (FLETLLVSIF…LAQLWQDFTQ (283 aa)) enclose the ABC transmembrane type-1 domain. Transmembrane regions (helical) follow at residues 159 to 179 (LLVS…FQVV), 192 to 212 (LNII…LSGL), 270 to 290 (ALTS…MWYY), 296 to 316 (LVIL…SPIL), and 389 to 409 (VMVI…LSIG). The ABC transporter domain occupies 469 to 704 (IAFKNIRFRY…NNGLYSYLHQ (236 aa)). Residue 503 to 510 (GRSGSGKS) participates in ATP binding.

The protein belongs to the ABC transporter superfamily. Protein-1 exporter (TC 3.A.1.109) family. As to quaternary structure, homodimer.

The protein localises to the cell inner membrane. The catalysed reaction is ATP + H2O + proteinSide 1 = ADP + phosphate + proteinSide 2.. Functionally, part of the ABC transporter complex LktBD involved in leukotoxin export. Transmembrane domains (TMD) form a pore in the inner membrane and the ATP-binding domain (NBD) is responsible for energy generation. The chain is Leukotoxin translocation ATP-binding protein LktB (lktB) from Pasteurella haemolytica-like sp. (strain 5943B).